The chain runs to 291 residues: 3-hydroxy-5-phosphonooxypentane-2,4-dione thiolase (291 aa).

Catalysis depends on lysine 203, which acts as the Schiff-base intermediate with substrate.

It belongs to the DeoC/FbaB aldolase family. In terms of assembly, homodecamer.

Its subcellular location is the cytoplasm. It carries out the reaction dihydroxyacetone phosphate + acetyl-CoA = 3-hydroxy-2,4-dioxopentyl phosphate + CoA. Its function is as follows. Involved in the degradation of phospho-AI-2, thereby terminating induction of the lsr operon and closing the AI-2 signaling cycle. Catalyzes the transfer of an acetyl moiety from 3-hydroxy-5-phosphonooxypentane-2,4-dione to CoA to form glycerone phosphate and acetyl-CoA. The polypeptide is 3-hydroxy-5-phosphonooxypentane-2,4-dione thiolase (Salmonella typhimurium (strain LT2 / SGSC1412 / ATCC 700720)).